Here is an 84-residue protein sequence, read N- to C-terminus: UPF0297 protein NT01CX_2279 (84 aa).

This sequence belongs to the UPF0297 family.

This chain is UPF0297 protein NT01CX_2279, found in Clostridium novyi (strain NT).